The primary structure comprises 5005 residues: Bridge-like lipid transfer protein family member 1 (5005 aa).

Residues 27–47 (VVWLLVATILSCGWIIYLTYY) form a helical membrane-spanning segment. Disordered regions lie at residues 692–718 (RPAQKTSERVVSSPSMSPRPPVDPSEL) and 1205–1314 (KSVG…ASVC). The span at 708-718 (SPRPPVDPSEL) shows a compositional bias: pro residues. Basic and acidic residues predominate over residues 1205-1215 (KSVGIEGERKT). Residues 1226–1240 (SHSSSSSSEENSSSS) show a composition bias toward low complexity. A compositionally biased stretch (basic and acidic residues) spans 1248 to 1275 (GEKESPSSAADDHSVQKDLLHSARRDDG). Residues 1278–1303 (SVPTEISGTSPVSPNTQDKSVGQSPL) are compositionally biased toward polar residues. Phosphoserine occurs at positions 1301, 1305, and 1323. At Thr1325 the chain carries Phosphothreonine. Disordered stretches follow at residues 1343–1376 (SDVSRSDENVLDSPKQRRSFGSFPYTPSADSNSF), 1399–1425 (EEFEPISSDEGPGTYPGRKKKKKQMQQ), 1521–1544 (TNKRTSKSSLHRPLDLDTPTSEES), and 1676–1698 (FSENLSPKQDIRGTKTEHPMIGT). Phosphoserine is present on residues Ser1355 and Ser1406. Residues 1521–1530 (TNKRTSKSSL) show a composition bias toward basic residues. A compositionally biased stretch (basic and acidic residues) spans 1684 to 1693 (QDIRGTKTEH). Ser1805 and Ser1808 each carry phosphoserine. 6 disordered regions span residues 1927–1991 (RGGV…PLMP), 2165–2192 (PAQPLKPPATVDQEHEEGLGLDNGGGLQ), 2265–2288 (TSGDTATDSPVHVGRAGMPVKESP), 2367–2387 (ESPVTKSGHNSLPTGVAPNLP), 2400–2420 (SSDQNTLDGTHSQHSTSQDDV), and 2598–2677 (TAGS…KDVV). Composition is skewed to polar residues over residues 1931–1948 (LTSNNSSDSPTGSGYNTD) and 1959–1971 (TSPSSDINGNSVS). 3 stretches are compositionally biased toward polar residues: residues 2367-2379 (ESPVTKSGHNSLP), 2400-2418 (SSDQNTLDGTHSQHSTSQD), and 2598-2608 (TAGSASPTPTF). Phosphoserine is present on residues Ser2601 and Ser2603. A compositionally biased stretch (low complexity) spans 2619–2638 (SDFSRSSRGSLNGGNRVNNA). Basic and acidic residues predominate over residues 2643 to 2665 (ANNENNKKESRNKNSLGRSERRT). Ser2755 carries the phosphoserine modification. Residues 2928-2967 (RQPSTAPQPMKEDIATPLPSEKTPTSVNQTPIETNEFPQL) are disordered. Polar residues predominate over residues 2949-2964 (KTPTSVNQTPIETNEF). Ser3562, Glu3577, and Ser3653 each carry phosphoserine. Disordered regions lie at residues 3614 to 3662 (YSRS…TFNI), 3686 to 3744 (SSNS…ERFY), 3821 to 3843 (RRSYDRSSRSLDQDSPSKKKKFQ), 3935 to 3954 (KTNTLLPPQPPPIPSAKGKG), 4089 to 4145 (TTYP…SSSS), and 4325 to 4396 (QSAS…ASQQ). Residues 3686–3711 (SSNSEGSCSVFSSPKTTGGFSPSVPF) show a composition bias toward polar residues. Residues 3727–3736 (EDSEKDEKDE) are compositionally biased toward acidic residues. Positions 3821–3837 (RRSYDRSSRSLDQDSPS) are enriched in basic and acidic residues. Over residues 4097-4112 (SPGSNAPQTGAKTSAS) the composition is skewed to polar residues. Residues 4117–4145 (PGSSGLGSPLGRSRHSSSQSDLTGSSSSS) are compositionally biased toward low complexity. Position 4124 is a phosphoserine (Ser4124). Residues 4325–4358 (QSASFTHMPQSPNVFNEHMTNNTMSPGTAAQSLK) show a composition bias toward polar residues. Over residues 4359–4372 (SPASIRSRSVSDSS) the composition is skewed to low complexity. The segment covering 4381 to 4396 (KTSTPVNKSNKAASQQ) has biased composition (polar residues).

In terms of tissue distribution, highly expressed in testis and ovary. Weakly or not expressed in other tissues.

It is found in the cell membrane. It localises to the endoplasmic reticulum membrane. The protein localises to the mitochondrion membrane. Tube-forming lipid transport protein which provides phosphatidylethanolamine for glycosylphosphatidylinositol (GPI) anchor synthesis in the endoplasmic reticulum. Plays a role in endosomal trafficking and endosome recycling. Also involved in the actin cytoskeleton and cilia structural dynamics. Acts as a regulator of phagocytosis. This chain is Bridge-like lipid transfer protein family member 1 (Bltp1), found in Mus musculus (Mouse).